The primary structure comprises 58 residues: Small ribosomal subunit protein bS21 (58 aa).

Residues 31-58 are disordered; it reads DLKRIRHHETPVEKYKRKAQQRRRSRRR. Basic residues predominate over residues 45 to 58; the sequence is YKRKAQQRRRSRRR.

This sequence belongs to the bacterial ribosomal protein bS21 family.

The chain is Small ribosomal subunit protein bS21 from Prochlorococcus marinus (strain MIT 9303).